The following is a 414-amino-acid chain: Serine hydroxymethyltransferase (414 aa).

(6S)-5,6,7,8-tetrahydrofolate contacts are provided by residues Leu-116 and 120–122 (GHL). The residue at position 224 (Lys-224) is an N6-(pyridoxal phosphate)lysine. Residues Glu-240 and 348-350 (SPF) each bind (6S)-5,6,7,8-tetrahydrofolate.

Belongs to the SHMT family. In terms of assembly, homodimer. The cofactor is pyridoxal 5'-phosphate.

It localises to the cytoplasm. It carries out the reaction (6R)-5,10-methylene-5,6,7,8-tetrahydrofolate + glycine + H2O = (6S)-5,6,7,8-tetrahydrofolate + L-serine. It participates in one-carbon metabolism; tetrahydrofolate interconversion. The protein operates within amino-acid biosynthesis; glycine biosynthesis; glycine from L-serine: step 1/1. Its function is as follows. Catalyzes the reversible interconversion of serine and glycine with tetrahydrofolate (THF) serving as the one-carbon carrier. This reaction serves as the major source of one-carbon groups required for the biosynthesis of purines, thymidylate, methionine, and other important biomolecules. Also exhibits THF-independent aldolase activity toward beta-hydroxyamino acids, producing glycine and aldehydes, via a retro-aldol mechanism. The polypeptide is Serine hydroxymethyltransferase (Campylobacter concisus (strain 13826)).